A 328-amino-acid chain; its full sequence is 3-dehydroquinate synthase (328 aa).

This sequence belongs to the archaeal-type DHQ synthase family.

The enzyme catalyses 2-amino-2,3,7-trideoxy-D-lyxo-hept-6-ulosonate + NAD(+) + H2O = 3-dehydroquinate + NH4(+) + NADH + H(+). Functionally, catalyzes the oxidative deamination and cyclization of 2-amino-3,7-dideoxy-D-threo-hept-6-ulosonic acid (ADH) to yield 3-dehydroquinate (DHQ), which is fed into the canonical shikimic pathway of aromatic amino acid biosynthesis. This Methanosphaerula palustris (strain ATCC BAA-1556 / DSM 19958 / E1-9c) protein is 3-dehydroquinate synthase.